The chain runs to 602 residues: Putative ankyrin repeat protein L100 (602 aa).

ANK repeat units lie at residues 133–162 (VLFY…SLIS), 269–294 (YLEK…KKSI), 295–324 (NKER…NINL), 325–354 (LKGT…DIHI), 355–384 (RDNA…DIHT), 386–414 (SSQA…DIRS), 416–444 (ENIL…DVLS), 445–474 (KGVE…DICA), 476–504 (DNEA…DVKA), 506–534 (DNEA…DITA), and 536–566 (NNEA…DVHA).

The polypeptide is Putative ankyrin repeat protein L100 (Acanthamoeba polyphaga mimivirus (APMV)).